Consider the following 347-residue polypeptide: Malate dehydrogenase, mitochondrial (347 aa).

A mitochondrion-targeting transit peptide spans 1-27 (MKASILRSVRSAVSRSSSSNRLLSRSF). NAD(+)-binding positions include 41–47 (GAAGGIG) and D67. Residues R114 and R120 each coordinate substrate. Residues N127 and 150–152 (ISN) each bind NAD(+). N152 and R186 together coordinate substrate. The active-site Proton acceptor is H210. An NAD(+)-binding site is contributed by M261.

The protein belongs to the LDH/MDH superfamily. MDH type 1 family. Homodimer.

It localises to the mitochondrion matrix. It carries out the reaction (S)-malate + NAD(+) = oxaloacetate + NADH + H(+). The polypeptide is Malate dehydrogenase, mitochondrial (MMDH) (Citrullus lanatus (Watermelon)).